The sequence spans 283 residues: Diaminopimelate epimerase (283 aa).

Positions 13, 45, and 65 each coordinate substrate. Cys-74 (proton donor) is an active-site residue. Residues 75-76, Asn-156, Asn-190, and 208-209 each bind substrate; these read GN and ER. Cys-217 functions as the Proton acceptor in the catalytic mechanism. 218 to 219 lines the substrate pocket; the sequence is GS.

This sequence belongs to the diaminopimelate epimerase family. Homodimer.

Its subcellular location is the cytoplasm. The enzyme catalyses (2S,6S)-2,6-diaminopimelate = meso-2,6-diaminopimelate. The protein operates within amino-acid biosynthesis; L-lysine biosynthesis via DAP pathway; DL-2,6-diaminopimelate from LL-2,6-diaminopimelate: step 1/1. In terms of biological role, catalyzes the stereoinversion of LL-2,6-diaminopimelate (L,L-DAP) to meso-diaminopimelate (meso-DAP), a precursor of L-lysine and an essential component of the bacterial peptidoglycan. The polypeptide is Diaminopimelate epimerase (Bartonella henselae (strain ATCC 49882 / DSM 28221 / CCUG 30454 / Houston 1) (Rochalimaea henselae)).